Consider the following 1112-residue polypeptide: Cytosolic carboxypeptidase 4 (1112 aa).

The interval 291–345 (TTEPPHDLPEEDFEDDGDDEVDKDSDTEDGKVEDDDLETDVNKLSSKPGLDRPEE) is disordered. Over residues 299–329 (PEEDFEDDGDDEVDKDSDTEDGKVEDDDLET) the composition is skewed to acidic residues. The 291-residue stretch at 732–1022 (YPYTYTALMT…HPVDGLQGLQ (291 aa)) folds into the Peptidase M14 domain. H804, E807, and H901 together coordinate Zn(2+). The Proton donor/acceptor role is filled by E986.

The protein belongs to the peptidase M14 family. Interacts with MYLK. Interacts with TCF4. The cofactor is Zn(2+). Expressed in corneal endothelium.

It localises to the cytoplasm. It is found in the cytosol. The catalysed reaction is (L-glutamyl)(n+1)-gamma-L-glutamyl-L-glutamyl-[protein] + H2O = (L-glutamyl)(n)-gamma-L-glutamyl-L-glutamyl-[protein] + L-glutamate. The enzyme catalyses C-terminal L-alpha-aminoacyl-L-glutamyl-L-glutamyl-[tubulin] + H2O = C-terminal L-alpha-aminoacyl-L-glutamyl-[tubulin] + L-glutamate. Its function is as follows. Metallocarboxypeptidase that mediates deglutamylation of tubulin and non-tubulin target proteins. Catalyzes the removal of polyglutamate side chains present on the gamma-carboxyl group of glutamate residues within the C-terminal tail of tubulin protein. Specifically cleaves tubulin long-side-chains, while it is not able to remove the branching point glutamate. Also catalyzes the removal of polyglutamate residues from the carboxy-terminus of non-tubulin proteins such as MYLK. This chain is Cytosolic carboxypeptidase 4, found in Homo sapiens (Human).